The sequence spans 303 residues: Elongation factor Ts (303 aa).

The segment at Thr-81–Val-84 is involved in Mg(2+) ion dislocation from EF-Tu.

It belongs to the EF-Ts family.

It localises to the cytoplasm. In terms of biological role, associates with the EF-Tu.GDP complex and induces the exchange of GDP to GTP. It remains bound to the aminoacyl-tRNA.EF-Tu.GTP complex up to the GTP hydrolysis stage on the ribosome. The chain is Elongation factor Ts from Mesomycoplasma hyopneumoniae (strain 232) (Mycoplasma hyopneumoniae).